We begin with the raw amino-acid sequence, 235 residues long: Thiamine import ATP-binding protein ThiQ (235 aa).

Positions 2-230 (LKLIDITWLY…QASASALLGI (229 aa)) constitute an ABC transporter domain. 32–39 (GPSGAGKS) contacts ATP.

The protein belongs to the ABC transporter superfamily. Thiamine importer (TC 3.A.1.19.1) family. As to quaternary structure, the complex is composed of two ATP-binding proteins (ThiQ), two transmembrane proteins (ThiP) and a solute-binding protein (ThiB).

The protein localises to the cell inner membrane. The catalysed reaction is thiamine(out) + ATP + H2O = thiamine(in) + ADP + phosphate + H(+). In terms of biological role, part of the ABC transporter complex ThiBPQ involved in thiamine import. Responsible for energy coupling to the transport system. Is also involved in thiamine pyrophosphate (TPP) transport. In Salmonella typhimurium (strain LT2 / SGSC1412 / ATCC 700720), this protein is Thiamine import ATP-binding protein ThiQ.